Consider the following 638-residue polypeptide: MRFRSRHQVDKPNVIVTQSNRKNEDRLGEDASLKAAQAMFKKHTVSQGFAVSDAPGTKLSLPNSGHGTPAHNVQAMARSSSSSSATSTPINIIRRSPRSSLKGKPMGGLSVSPRTVEGNAALSQQAAAVALENEISGDESIVLVPAGNSNGSMTRSNSSINAIRIVPGGGLSSSRSSSKVSIVKNSPTHSLALADKLNSITLESVYGKPSTATGTATRTLAGRKAPPAAFIDQDSVLSNDKHSENEDTPIKGTISYDTTARMNVPVTYEGTLPDLIPGHQRHKKKKWRNIFGSSATHGSSAGGAIGINGTSASGNDQYENPSGTLSELQLNRAEDNLIVKSVNPTQKTRLQTTLRSNDYDRNSELAAVAGGYSSDESAFSSDSDRELHYATDNHHNNSINNHSSGVYYGNVGGNGVYNGGTAGVGRTKHRAMVRSHKRKSFNEDKPWKSHVDIGYISERERKRYEGIWVTNRNSYLELLPWWNQPLQDEEQEQEQEREMDHESQHGLEEELEEEREQESGQGQEQDADIPEDGLMLNLIVMEIWSRSNLSNQLLGQIYDKVDTRHDGTLNRQSFLTGMWLVDQCLYGRKLPKQIDQRVWDSVDKFVISIPNNNPHHRHRRRKKMLRKELKTIKKDLKT.

Disordered stretches follow at residues 292-315 (GSSATHGSSAGGAIGINGTSASGN) and 487-529 (QDEE…DADI). Residues 494–508 (EQEREMDHESQHGLE) are compositionally biased toward basic and acidic residues. In terms of domain architecture, EH spans 508 to 604 (EEELEEEREQ…DQRVWDSVDK (97 aa)).

It belongs to the IRS4 family.

Positive regulator of phosphatidylinositol 4,5-bisphosphate turnover and negatively regulates signaling through the cell integrity pathway. Involved in rDNA silencing. The protein is Increased rDNA silencing protein 4 (IRS4) of Kluyveromyces lactis (strain ATCC 8585 / CBS 2359 / DSM 70799 / NBRC 1267 / NRRL Y-1140 / WM37) (Yeast).